The sequence spans 337 residues: Peptide methionine sulfoxide reductase MsrA/MsrB (337 aa).

Residues 28–181 (KDIYLAGGCF…PGGYCHVDLS (154 aa)) form a peptide methionine sulfoxide reductase A region. Cys36 is an active-site residue. One can recognise a MsrB domain in the interval 198 to 321 (KDELKAKLSD…NGASLKFIPL (124 aa)). Cys310 acts as the Nucleophile in catalysis.

In the N-terminal section; belongs to the MsrA Met sulfoxide reductase family. This sequence in the C-terminal section; belongs to the MsrB Met sulfoxide reductase family.

It carries out the reaction L-methionyl-[protein] + [thioredoxin]-disulfide + H2O = L-methionyl-(S)-S-oxide-[protein] + [thioredoxin]-dithiol. The catalysed reaction is [thioredoxin]-disulfide + L-methionine + H2O = L-methionine (S)-S-oxide + [thioredoxin]-dithiol. It catalyses the reaction L-methionyl-[protein] + [thioredoxin]-disulfide + H2O = L-methionyl-(R)-S-oxide-[protein] + [thioredoxin]-dithiol. Has an important function as a repair enzyme for proteins that have been inactivated by oxidation. Catalyzes the reversible oxidation-reduction of methionine sulfoxide in proteins to methionine. The polypeptide is Peptide methionine sulfoxide reductase MsrA/MsrB (msrAB) (Campylobacter fetus).